A 364-amino-acid polypeptide reads, in one-letter code: Chaperone protein DnaJ (364 aa).

The region spanning 4-69 is the J domain; that stretch reads DYYEILGLSK…NKKAKYDRFG (66 aa). The segment at 135–213 adopts a CR-type zinc-finger fold; the sequence is GYKNNINITR…CKGKGRITNQ (79 aa). 8 residues coordinate Zn(2+): C148, C151, C165, C168, C187, C190, C201, and C204. CXXCXGXG motif repeat units follow at residues 148-155, 165-172, 187-194, and 201-208; these read CHSCLGKK, CNMCNGSG, CSKCYGEG, and CKSCKGKG.

Belongs to the DnaJ family. In terms of assembly, homodimer. It depends on Zn(2+) as a cofactor.

The protein localises to the cytoplasm. In terms of biological role, participates actively in the response to hyperosmotic and heat shock by preventing the aggregation of stress-denatured proteins and by disaggregating proteins, also in an autonomous, DnaK-independent fashion. Unfolded proteins bind initially to DnaJ; upon interaction with the DnaJ-bound protein, DnaK hydrolyzes its bound ATP, resulting in the formation of a stable complex. GrpE releases ADP from DnaK; ATP binding to DnaK triggers the release of the substrate protein, thus completing the reaction cycle. Several rounds of ATP-dependent interactions between DnaJ, DnaK and GrpE are required for fully efficient folding. Also involved, together with DnaK and GrpE, in the DNA replication of plasmids through activation of initiation proteins. In Borrelia garinii subsp. bavariensis (strain ATCC BAA-2496 / DSM 23469 / PBi) (Borreliella bavariensis), this protein is Chaperone protein DnaJ.